A 261-amino-acid polypeptide reads, in one-letter code: Undecaprenyl-diphosphatase (261 aa).

Helical transmembrane passes span 38–58, 75–95, 106–126, 136–156, 181–201, 217–237, and 241–261; these read RSDFFNIVIQAGAILAITFVF, RDYVMKLATAFLITAVVGLAV, IQPIAWALIIGGIWILIAESV, VTWSVAIAVGLAQVVAGVFPG, FSFLVGIPTMFSASSYACFEL, VAFVAAMLTGFAVVKWLLGYI, and SFAPFAYYRIALGLVLLTWLT.

This sequence belongs to the UppP family.

The protein resides in the cell inner membrane. The catalysed reaction is di-trans,octa-cis-undecaprenyl diphosphate + H2O = di-trans,octa-cis-undecaprenyl phosphate + phosphate + H(+). In terms of biological role, catalyzes the dephosphorylation of undecaprenyl diphosphate (UPP). Confers resistance to bacitracin. This chain is Undecaprenyl-diphosphatase, found in Xylella fastidiosa (strain Temecula1 / ATCC 700964).